Here is a 439-residue protein sequence, read N- to C-terminus: Taxadien-5-alpha-ol O-acetyltransferase (439 aa).

Active-site proton acceptor residues include His-164 and Asp-373.

This sequence belongs to the plant acyltransferase family.

The enzyme catalyses taxa-4(20),11-dien-5alpha-ol + acetyl-CoA = taxa-4(20),11-dien-5alpha-yl acetate + CoA. It participates in alkaloid biosynthesis; taxol biosynthesis; 10-deacetyl-2-debenzoylbaccatin III from taxa-4(20),11-dien-5alpha-ol: step 1/3. The polypeptide is Taxadien-5-alpha-ol O-acetyltransferase (TAT) (Taxus cuspidata (Japanese yew)).